The sequence spans 172 residues: dCTP deaminase (172 aa).

Residues 97–102 (RSSFAR) and aspartate 113 contribute to the dCTP site. The active-site Proton donor/acceptor is the glutamate 123. Residues tyrosine 155 and glutamine 162 each coordinate dCTP.

This sequence belongs to the dCTP deaminase family. As to quaternary structure, homotrimer.

It catalyses the reaction dCTP + H2O + H(+) = dUTP + NH4(+). It participates in pyrimidine metabolism; dUMP biosynthesis; dUMP from dCTP (dUTP route): step 1/2. In terms of biological role, catalyzes the deamination of dCTP to dUTP. This is dCTP deaminase from Metallosphaera sedula (strain ATCC 51363 / DSM 5348 / JCM 9185 / NBRC 15509 / TH2).